Consider the following 374-residue polypeptide: Palmitoyltransferase PFA5 (374 aa).

The Cytoplasmic portion of the chain corresponds to 1 to 13 (MALSWNIRIRRRS). Residues 14-34 (WFRFILPIIVLGLLCYGTWAY) form a helical membrane-spanning segment. The Lumenal segment spans residues 35-55 (CHKLCYEQVDKRLRQKSVSVG). Residues 56–76 (LICAVCFLDVVVIFIWLQIVI) traverse the membrane as a helical segment. The Cytoplasmic segment spans residues 77-173 (LVGPGTQPHV…TVIGRDNYRL (97 aa)). One can recognise a DHHC domain in the interval 129 to 179 (IWCSECQSLKMERTHHSSELGHCIPRFDHYCMWIGTVIGRDNYRLFVQFAA). Residues 174–194 (FVQFAAYFSTLLLIMWVSICV) form a helical membrane-spanning segment. Residues 195-217 (YIRIITQHNHNYSPNLNANIIST) lie on the Lumenal side of the membrane. The chain crosses the membrane as a helical span at residues 218–238 (LVFAILGWLLTASLLASSIFY). The Cytoplasmic segment spans residues 239–374 (MSQNKTSLEA…ASGDDSDPAY (136 aa)).

The protein belongs to the DHHC palmitoyltransferase family. PFA5 subfamily. Post-translationally, autopalmitoylated.

The protein resides in the membrane. The enzyme catalyses L-cysteinyl-[protein] + hexadecanoyl-CoA = S-hexadecanoyl-L-cysteinyl-[protein] + CoA. This Saccharomyces cerevisiae (strain ATCC 204508 / S288c) (Baker's yeast) protein is Palmitoyltransferase PFA5 (PFA5).